Reading from the N-terminus, the 245-residue chain is Ubiquinone/menaquinone biosynthesis C-methyltransferase UbiE (245 aa).

Residues T71, D92, and D118–A119 contribute to the S-adenosyl-L-methionine site.

The protein belongs to the class I-like SAM-binding methyltransferase superfamily. MenG/UbiE family.

It carries out the reaction a 2-demethylmenaquinol + S-adenosyl-L-methionine = a menaquinol + S-adenosyl-L-homocysteine + H(+). It catalyses the reaction a 2-methoxy-6-(all-trans-polyprenyl)benzene-1,4-diol + S-adenosyl-L-methionine = a 5-methoxy-2-methyl-3-(all-trans-polyprenyl)benzene-1,4-diol + S-adenosyl-L-homocysteine + H(+). Its pathway is quinol/quinone metabolism; menaquinone biosynthesis; menaquinol from 1,4-dihydroxy-2-naphthoate: step 2/2. The protein operates within cofactor biosynthesis; ubiquinone biosynthesis. Its function is as follows. Methyltransferase required for the conversion of demethylmenaquinol (DMKH2) to menaquinol (MKH2) and the conversion of 2-polyprenyl-6-methoxy-1,4-benzoquinol (DDMQH2) to 2-polyprenyl-3-methyl-6-methoxy-1,4-benzoquinol (DMQH2). The chain is Ubiquinone/menaquinone biosynthesis C-methyltransferase UbiE from Neisseria meningitidis serogroup A / serotype 4A (strain DSM 15465 / Z2491).